A 92-amino-acid polypeptide reads, in one-letter code: Large ribosomal subunit protein uL23c (92 aa).

The protein belongs to the universal ribosomal protein uL23 family. Part of the 50S ribosomal subunit.

It localises to the plastid. Its subcellular location is the chloroplast. Its function is as follows. Binds to 23S rRNA. The sequence is that of Large ribosomal subunit protein uL23c (rpl23) from Mesostigma viride (Green alga).